Reading from the N-terminus, the 20-residue chain is Hemocyanin subunit 6 (20 aa).

The protein belongs to the tyrosinase family. Hemocyanin subfamily. In terms of tissue distribution, hemolymph.

Its subcellular location is the secreted. The protein resides in the extracellular space. Hemocyanins are copper-containing oxygen carriers occurring freely dissolved in the hemolymph of many mollusks and arthropods. This is Hemocyanin subunit 6 from Homarus americanus (American lobster).